The primary structure comprises 457 residues: F-box/LRR-repeat protein At2g42730 (457 aa).

An F-box domain is found at 4–50 (KDVISRLPDEVLGRILSLISTKEAVSTSVLSKRWKNMFVLVSNLDID). 3 LRR repeats span residues 265-288 (MDETRMVGVRNGSLGSIPADMRNL), 292-315 (IRNVRILHLSSHTLELLYFSCKEM), and 318-343 (FDSLVSLSIGNDKARGWQMLPLLIKN).

The chain is F-box/LRR-repeat protein At2g42730 from Arabidopsis thaliana (Mouse-ear cress).